The primary structure comprises 296 residues: Acetylglutamate kinase (296 aa).

Substrate is bound by residues 69–70 (GG), Arg91, and Asn193.

This sequence belongs to the acetylglutamate kinase family. ArgB subfamily.

It localises to the cytoplasm. It carries out the reaction N-acetyl-L-glutamate + ATP = N-acetyl-L-glutamyl 5-phosphate + ADP. The protein operates within amino-acid biosynthesis; L-arginine biosynthesis; N(2)-acetyl-L-ornithine from L-glutamate: step 2/4. Catalyzes the ATP-dependent phosphorylation of N-acetyl-L-glutamate. This chain is Acetylglutamate kinase, found in Verminephrobacter eiseniae (strain EF01-2).